Here is a 427-residue protein sequence, read N- to C-terminus: ATP-dependent RNA helicase DDX39A (427 aa).

A compositionally biased stretch (acidic residues) spans 1–19; it reads MAEQDVENDLLDYDEEEEP. Residues 1–34 form a disordered region; it reads MAEQDVENDLLDYDEEEEPQAPQESTPAPPKKDI. At A2 the chain carries N-acetylalanine. Residue K31 forms a Glycyl lysine isopeptide (Lys-Gly) (interchain with G-Cter in SUMO2) linkage. Position 35 is an N6-acetyllysine; alternate (K35). K35 is covalently cross-linked (Glycyl lysine isopeptide (Lys-Gly) (interchain with G-Cter in SUMO2); alternate). At S37 the chain carries Phosphoserine. Residues 44 to 72 carry the Q motif motif; sequence SGFRDFLLKPELLRAIVDCGFEHPSEVQH. Residues 75–248 enclose the Helicase ATP-binding domain; the sequence is IPQAILGMDV…RKFMQDPMEV (174 aa). 88 to 95 serves as a coordination point for ATP; sequence AKSGMGKT. Residues K154 and K162 each participate in a glycyl lysine isopeptide (Lys-Gly) (interchain with G-Cter in SUMO2) cross-link. T171 is modified (phosphothreonine). The DECD box signature appears at 195–198; sequence DECD. Residues K240 and K255 each participate in a glycyl lysine isopeptide (Lys-Gly) (interchain with G-Cter in SUMO2) cross-link. Residues 260–421 form the Helicase C-terminal domain; that stretch reads GLQQYYVKLK…ELPEEIDIST (162 aa). S426 is subject to Phosphoserine.

This sequence belongs to the DEAD box helicase family. DECD subfamily. In terms of assembly, binds ALYREF/THOC4 and DDX39B/BAT1. Interacts with the apo-AREX complex component SARNP. Interacts with MX1. Interacts with MCM3AP isoform GANP. Interacts with ECD. Interacts with PHAX; this interaction stimulates PHAX RNA binding activity. (Microbial infection) Interacts with human cytomegalovirus/HHV-5 protein UL69. SUMOylated by RANBP2; SUMOylation modification affects its ability to bind RNA. As to expression, detected in testis, and at lower levels in brain, kidney, lung, thymus, spleen and salivary gland.

Its subcellular location is the nucleus. The protein localises to the cytoplasm. The catalysed reaction is ATP + H2O = ADP + phosphate + H(+). Helicase that plays an essential role in mRNA export and is involved in multiple steps in RNA metabolism including alternative splicing. Regulates nuclear mRNA export to the cytoplasm through association with ECD. Also involved in spliceosomal uridine-rich small nuclear RNA (U snRNA) export by stimulating the RNA binding of adapter PHAX. Plays a role in the negative regulation of type I IFN production by increasing the nuclear retention of antiviral transcripts and thus reducing their protein expression. Independently of the interferon pathway, plays an antiviral role against alphaviruses by binding to a 5' conserved sequence element in the viral genomic RNA. The sequence is that of ATP-dependent RNA helicase DDX39A (DDX39A) from Homo sapiens (Human).